Consider the following 264-residue polypeptide: 3-methyl-2-oxobutanoate hydroxymethyltransferase (264 aa).

Residues aspartate 45 and aspartate 84 each contribute to the Mg(2+) site. Residues 45–46 (DS), aspartate 84, and lysine 112 contribute to the 3-methyl-2-oxobutanoate site. Glutamate 114 contacts Mg(2+). Catalysis depends on glutamate 181, which acts as the Proton acceptor.

It belongs to the PanB family. In terms of assembly, homodecamer; pentamer of dimers. Mg(2+) serves as cofactor.

It localises to the cytoplasm. The catalysed reaction is 3-methyl-2-oxobutanoate + (6R)-5,10-methylene-5,6,7,8-tetrahydrofolate + H2O = 2-dehydropantoate + (6S)-5,6,7,8-tetrahydrofolate. The protein operates within cofactor biosynthesis; (R)-pantothenate biosynthesis; (R)-pantoate from 3-methyl-2-oxobutanoate: step 1/2. Its function is as follows. Catalyzes the reversible reaction in which hydroxymethyl group from 5,10-methylenetetrahydrofolate is transferred onto alpha-ketoisovalerate to form ketopantoate. This Shewanella sediminis (strain HAW-EB3) protein is 3-methyl-2-oxobutanoate hydroxymethyltransferase.